Reading from the N-terminus, the 374-residue chain is Putative C-&gt;U-editing enzyme APOBEC-4 (374 aa).

Residues 60–176 enclose the CMP/dCMP-type deaminase domain; it reads PQTKHLTFYE…AWNRKALQSL (117 aa). His-92 is a binding site for Zn(2+). Glu-94 (proton donor) is an active-site residue. The Zn(2+) site is built by Cys-126 and Cys-133. Positions 259–280 are disordered; that stretch reads EKHPLGSAAPAQRQPTRGQDPR.

Belongs to the cytidine and deoxycytidylate deaminase family. Requires Zn(2+) as cofactor. Predominantly expressed in testis.

Its function is as follows. Putative C to U editing enzyme whose physiological substrate is not yet known. This is Putative C-&gt;U-editing enzyme APOBEC-4 (Apobec4) from Mus musculus (Mouse).